Consider the following 191-residue polypeptide: LOB domain-containing protein 19 (191 aa).

In terms of domain architecture, LOB spans 15–117 (GPCGACKFLR…AELAHVQARL (103 aa)).

It belongs to the LOB domain-containing protein family. Expressed in shoots, roots and floral tissues, but not in stems or leaves.

This chain is LOB domain-containing protein 19 (LBD19), found in Arabidopsis thaliana (Mouse-ear cress).